The sequence spans 99 residues: Nucleoid-associated protein SZO_16661 (99 aa).

The protein belongs to the YbaB/EbfC family. As to quaternary structure, homodimer.

The protein localises to the cytoplasm. The protein resides in the nucleoid. Its function is as follows. Binds to DNA and alters its conformation. May be involved in regulation of gene expression, nucleoid organization and DNA protection. The sequence is that of Nucleoid-associated protein SZO_16661 from Streptococcus equi subsp. zooepidemicus (strain H70).